A 460-amino-acid polypeptide reads, in one-letter code: Squalene synthase (460 aa).

The helical transmembrane segment at I425–F445 threads the bilayer.

It belongs to the phytoene/squalene synthase family. As to quaternary structure, interacts with pof14. It depends on Mg(2+) as a cofactor.

Its subcellular location is the endoplasmic reticulum membrane. It carries out the reaction 2 (2E,6E)-farnesyl diphosphate + NADPH + H(+) = squalene + 2 diphosphate + NADP(+). It catalyses the reaction 2 (2E,6E)-farnesyl diphosphate + NADH + H(+) = squalene + 2 diphosphate + NAD(+). The protein operates within terpene metabolism; lanosterol biosynthesis; lanosterol from farnesyl diphosphate: step 1/3. It participates in steroid metabolism; ergosterol biosynthesis. Its function is as follows. Squalene synthase; part of the third module of ergosterol biosynthesis pathway that includes by the late steps of the pathway. Erg9 produces squalene from 2 farnesyl pyrophosphate moieties. The third module or late pathway involves the ergosterol synthesis itself through consecutive reactions that mainly occur in the endoplasmic reticulum (ER) membrane. Firstly, the squalene synthase erg9 catalyzes the condensation of 2 farnesyl pyrophosphate moieties to form squalene, which is the precursor of all steroids. Secondly, squalene is converted into lanosterol by the consecutive action of the squalene epoxidase erg1 and the lanosterol synthase erg7. The lanosterol 14-alpha-demethylase erg11/cyp1 catalyzes C14-demethylation of lanosterol to produce 4,4'-dimethyl cholesta-8,14,24-triene-3-beta-ol. In the next steps, a complex process involving various demethylation, reduction and desaturation reactions catalyzed by the C-14 reductase erg24 and the C-4 demethylation complex erg25-erg26-erg27 leads to the production of zymosterol. Erg28 likely functions in the C-4 demethylation complex reaction by tethering erg26 and Erg27 to the endoplasmic reticulum or to facilitate interaction between these proteins. Then, the sterol 24-C-methyltransferase erg6 catalyzes the methyl transfer from S-adenosyl-methionine to the C-24 of zymosterol to form fecosterol. The C-8 sterol isomerase erg2 catalyzes the reaction which results in unsaturation at C-7 in the B ring of sterols and thus converts fecosterol to episterol. The sterol-C5-desaturases erg31 and erg32 then catalyze the introduction of a C-5 double bond in the B ring to produce 5-dehydroepisterol. The C-22 sterol desaturase erg5 further converts 5-dehydroepisterol into ergosta-5,7,22,24(28)-tetraen-3beta-ol by forming the C-22(23) double bond in the sterol side chain. Finally, ergosta-5,7,22,24(28)-tetraen-3beta-ol is substrate of the C-24(28) sterol reductase erg4 to produce ergosterol. In the genus Schizosaccharomyces, a second route exists between lanosterol and fecosterol, via the methylation of lanosterol to eburicol by erg6, followed by C14-demethylation by erg11/cyp1 and C4-demethylation by the demethylation complex erg25-erg26-erg27. The sequence is that of Squalene synthase from Schizosaccharomyces pombe (strain 972 / ATCC 24843) (Fission yeast).